The following is a 221-amino-acid chain: Probable septum site-determining protein MinC (221 aa).

Belongs to the MinC family. In terms of assembly, interacts with MinD and FtsZ.

Its function is as follows. Cell division inhibitor that blocks the formation of polar Z ring septums. Rapidly oscillates between the poles of the cell to destabilize FtsZ filaments that have formed before they mature into polar Z rings. Prevents FtsZ polymerization. The protein is Probable septum site-determining protein MinC of Aliivibrio salmonicida (strain LFI1238) (Vibrio salmonicida (strain LFI1238)).